The sequence spans 197 residues: Nucleoid occlusion factor SlmA (197 aa).

The HTH tetR-type domain occupies 6–66 (NDRRTQILQA…GLIEFIEESL (61 aa)). A DNA-binding region (H-T-H motif) is located at residues 29 to 48 (TTAALAKQVGVSEAALYRHF).

The protein belongs to the nucleoid occlusion factor SlmA family. In terms of assembly, homodimer. Interacts with FtsZ.

The protein resides in the cytoplasm. It localises to the nucleoid. Its function is as follows. Required for nucleoid occlusion (NO) phenomenon, which prevents Z-ring formation and cell division over the nucleoid. Acts as a DNA-associated cell division inhibitor that binds simultaneously chromosomal DNA and FtsZ, and disrupts the assembly of FtsZ polymers. SlmA-DNA-binding sequences (SBS) are dispersed on non-Ter regions of the chromosome, preventing FtsZ polymerization at these regions. The protein is Nucleoid occlusion factor SlmA of Marinomonas sp. (strain MWYL1).